The primary structure comprises 295 residues: Lipoyl synthase (295 aa).

Cys-34, Cys-39, Cys-45, Cys-60, Cys-64, Cys-67, and Ser-273 together coordinate [4Fe-4S] cluster. The Radical SAM core domain maps to 46–262 (WNKRHATIMV…KRMAYAKGFS (217 aa)).

This sequence belongs to the radical SAM superfamily. Lipoyl synthase family. The cofactor is [4Fe-4S] cluster.

Its subcellular location is the cytoplasm. It carries out the reaction [[Fe-S] cluster scaffold protein carrying a second [4Fe-4S](2+) cluster] + N(6)-octanoyl-L-lysyl-[protein] + 2 oxidized [2Fe-2S]-[ferredoxin] + 2 S-adenosyl-L-methionine + 4 H(+) = [[Fe-S] cluster scaffold protein] + N(6)-[(R)-dihydrolipoyl]-L-lysyl-[protein] + 4 Fe(3+) + 2 hydrogen sulfide + 2 5'-deoxyadenosine + 2 L-methionine + 2 reduced [2Fe-2S]-[ferredoxin]. It participates in protein modification; protein lipoylation via endogenous pathway; protein N(6)-(lipoyl)lysine from octanoyl-[acyl-carrier-protein]: step 2/2. Catalyzes the radical-mediated insertion of two sulfur atoms into the C-6 and C-8 positions of the octanoyl moiety bound to the lipoyl domains of lipoate-dependent enzymes, thereby converting the octanoylated domains into lipoylated derivatives. The protein is Lipoyl synthase of Anaplasma phagocytophilum (strain HZ).